The sequence spans 312 residues: Olfactory receptor 6C1 (312 aa).

Over 1–23 (MRNHTEITEFILLGLTDDPNFQV) the chain is Extracellular. Asn-3 carries an N-linked (GlcNAc...) asparagine glycan. A helical transmembrane segment spans residues 24–44 (VIFVFLLITYMLSITGNLTLI). Residues 45-52 (TITLLDSH) lie on the Cytoplasmic side of the membrane. The helical transmembrane segment at 53–73 (LQTPMYFFLRNFSILEISFTT) threads the bilayer. Residues 74-97 (VSIPKFLGNIISGDKTISFNNCIV) lie on the Extracellular side of the membrane. Cys-95 and Cys-187 are joined by a disulfide. Residues 98-118 (QLFFFILLGVTEFYLLAAMSY) form a helical membrane-spanning segment. Residues 119–137 (DRYVAICKPLHCLSIMNRR) lie on the Cytoplasmic side of the membrane. The helical transmembrane segment at 138 to 158 (VCTLLVFTSWLVSFLIIFPAL) threads the bilayer. The Extracellular portion of the chain corresponds to 159 to 195 (MLLLKLHYCRSNIIDHFTCDYFPLLQLACSDTKFLEV). A helical membrane pass occupies residues 196–215 (MGFSCAAFTLMFTLALIFLS). Residues 216 to 235 (YIYIIRTILRIPSTSQRTKA) are Cytoplasmic-facing. Residues 236–256 (FSTCSSHMVVVSISYGSCIFM) form a helical membrane-spanning segment. Residues 257–269 (YIKPSAKDRVSLS) lie on the Extracellular side of the membrane. The chain crosses the membrane as a helical span at residues 270–290 (KGVAILNTSVAPMMNPFIYSL). The Cytoplasmic portion of the chain corresponds to 291–312 (RNQQVKQAFINMARKTVFFTST).

This sequence belongs to the G-protein coupled receptor 1 family.

The protein resides in the cell membrane. Its function is as follows. Odorant receptor. This chain is Olfactory receptor 6C1 (OR6C1), found in Homo sapiens (Human).